Reading from the N-terminus, the 257-residue chain is tRNA (guanine-N(1)-)-methyltransferase (257 aa).

S-adenosyl-L-methionine contacts are provided by residues Gly113 and 133 to 138; that span reads IGDYVL.

The protein belongs to the RNA methyltransferase TrmD family. Homodimer.

It localises to the cytoplasm. The enzyme catalyses guanosine(37) in tRNA + S-adenosyl-L-methionine = N(1)-methylguanosine(37) in tRNA + S-adenosyl-L-homocysteine + H(+). Functionally, specifically methylates guanosine-37 in various tRNAs. This is tRNA (guanine-N(1)-)-methyltransferase from Cronobacter sakazakii (strain ATCC BAA-894) (Enterobacter sakazakii).